We begin with the raw amino-acid sequence, 318 residues long: Nucleotide-binding protein Jann_0539 (318 aa).

Position 17–24 (17–24 (GPSGAGRS)) interacts with ATP. 64–67 (DPRT) is a GTP binding site. A disordered region spans residues 278 to 318 (GWQVSKRHRDVDKDASENSDRDRGASARTAASTDDGEAEQP). Over residues 286–302 (RDVDKDASENSDRDRGA) the composition is skewed to basic and acidic residues.

The protein belongs to the RapZ-like family.

In terms of biological role, displays ATPase and GTPase activities. The chain is Nucleotide-binding protein Jann_0539 from Jannaschia sp. (strain CCS1).